The sequence spans 213 residues: Large ribosomal subunit protein uL3 (213 aa).

Gln-151 bears the N5-methylglutamine mark.

This sequence belongs to the universal ribosomal protein uL3 family. Part of the 50S ribosomal subunit. Forms a cluster with proteins L14 and L19. In terms of processing, methylated by PrmB.

One of the primary rRNA binding proteins, it binds directly near the 3'-end of the 23S rRNA, where it nucleates assembly of the 50S subunit. The sequence is that of Large ribosomal subunit protein uL3 from Rhizobium etli (strain ATCC 51251 / DSM 11541 / JCM 21823 / NBRC 15573 / CFN 42).